Consider the following 307-residue polypeptide: Ribosomal RNA small subunit methyltransferase A (307 aa).

6 residues coordinate S-adenosyl-L-methionine: asparagine 35, valine 37, glycine 62, glutamate 83, aspartate 113, and asparagine 136.

Belongs to the class I-like SAM-binding methyltransferase superfamily. rRNA adenine N(6)-methyltransferase family. RsmA subfamily.

Its subcellular location is the cytoplasm. It catalyses the reaction adenosine(1518)/adenosine(1519) in 16S rRNA + 4 S-adenosyl-L-methionine = N(6)-dimethyladenosine(1518)/N(6)-dimethyladenosine(1519) in 16S rRNA + 4 S-adenosyl-L-homocysteine + 4 H(+). Specifically dimethylates two adjacent adenosines (A1518 and A1519) in the loop of a conserved hairpin near the 3'-end of 16S rRNA in the 30S particle. May play a critical role in biogenesis of 30S subunits. The protein is Ribosomal RNA small subunit methyltransferase A of Bifidobacterium longum (strain DJO10A).